Consider the following 541-residue polypeptide: Formimidoyltransferase-cyclodeaminase (541 aa).

Positions Met1–Phe181 are formiminotransferase N-subdomain. His82 serves as the catalytic For formimidoyltransferase activity. Gly163–Gly172 contacts folate. Positions Leu182 to Val326 are formiminotransferase C-subdomain. Residues Pro327–Ser334 are linker. The tract at residues Leu335–Glu541 is cyclodeaminase/cyclohydrolase. Asp412 (for cyclodeaminase activity) is an active-site residue. Ser520 carries the post-translational modification Phosphoserine.

In the C-terminal section; belongs to the cyclodeaminase/cyclohydrolase family. It in the N-terminal section; belongs to the formiminotransferase family. As to quaternary structure, homooctamer, including four polyglutamate binding sites. The subunits are arranged as a tetramer of dimers, and form a planar ring-shaped structure.

Its subcellular location is the cytoplasm. It is found in the cytoskeleton. It localises to the microtubule organizing center. The protein localises to the centrosome. The protein resides in the centriole. Its subcellular location is the golgi apparatus. It carries out the reaction 5-formimidoyltetrahydrofolate + L-glutamate = N-formimidoyl-L-glutamate + (6S)-5,6,7,8-tetrahydrofolate. It catalyses the reaction (6S)-5-formyl-5,6,7,8-tetrahydrofolate + L-glutamate = N-formyl-L-glutamate + (6S)-5,6,7,8-tetrahydrofolate + H(+). The enzyme catalyses 5-formimidoyltetrahydrofolate + 2 H(+) = (6R)-5,10-methenyltetrahydrofolate + NH4(+). It functions in the pathway amino-acid degradation; L-histidine degradation into L-glutamate; L-glutamate from N-formimidoyl-L-glutamate (transferase route): step 1/1. It participates in one-carbon metabolism; tetrahydrofolate interconversion. In terms of biological role, folate-dependent enzyme, that displays both transferase and deaminase activity. Serves to channel one-carbon units from formiminoglutamate to the folate pool. Binds and promotes bundling of vimentin filaments originating from the Golgi. The polypeptide is Formimidoyltransferase-cyclodeaminase (Ftcd) (Mus musculus (Mouse)).